Here is a 253-residue protein sequence, read N- to C-terminus: Putative ankyrin repeat protein NMB1133/NMB1171 (253 aa).

2 ANK repeats span residues 196–225 (DGYT…NPAS) and 229–252 (EGYT…LEPR).

The polypeptide is Putative ankyrin repeat protein NMB1133/NMB1171 (Neisseria meningitidis serogroup B (strain ATCC BAA-335 / MC58)).